A 164-amino-acid polypeptide reads, in one-letter code: Phosphopantetheine adenylyltransferase (164 aa).

A substrate-binding site is contributed by Ser9. Residues 9–10 (SF) and His17 each bind ATP. Substrate is bound by residues Lys41, Leu73, and Lys87. ATP is bound by residues 88–90 (GLR), Glu98, and 123–129 (YSYISSS).

The protein belongs to the bacterial CoaD family. As to quaternary structure, homohexamer. The cofactor is Mg(2+).

The protein localises to the cytoplasm. It carries out the reaction (R)-4'-phosphopantetheine + ATP + H(+) = 3'-dephospho-CoA + diphosphate. It participates in cofactor biosynthesis; coenzyme A biosynthesis; CoA from (R)-pantothenate: step 4/5. In terms of biological role, reversibly transfers an adenylyl group from ATP to 4'-phosphopantetheine, yielding dephospho-CoA (dPCoA) and pyrophosphate. This chain is Phosphopantetheine adenylyltransferase, found in Clostridium perfringens (strain ATCC 13124 / DSM 756 / JCM 1290 / NCIMB 6125 / NCTC 8237 / Type A).